Here is a 61-residue protein sequence, read N- to C-terminus: Temporin-ALi (61 aa).

The first 22 residues, Met-1–Cys-22, serve as a signal peptide directing secretion. Residues Glu-23–Arg-46 constitute a propeptide that is removed on maturation. Leu-59 carries the leucine amide modification.

Belongs to the frog skin active peptide (FSAP) family. Temporin subfamily. In terms of tissue distribution, expressed by the skin glands.

The protein localises to the secreted. Its function is as follows. Antimicrobial peptide with activity against Gram-positive and Gram-negative bacteria and against fungi. Has been tested against S.aureus (MIC=7.5 ug/mL), B.pumilus (MIC=7.5 ug/mL), B.cereus (MIC=75.0 ug/mL), E.coli (MIC=7.5 ug/mL), B.dysenteriae (MIC=20.0 ug/mL), A.cacoaceticus (MIC=60.0 ug/mL), P.aeruginosa (MIC=5.0 ug/mL) and C.albicans (MIC=5.0 ug/mL). Also shows a weak hemolytic activity. The protein is Temporin-ALi of Amolops loloensis (Lolokou Sucker Frog).